The following is a 188-amino-acid chain: Adenine phosphoribosyltransferase (188 aa).

It belongs to the purine/pyrimidine phosphoribosyltransferase family. As to quaternary structure, homodimer.

Its subcellular location is the cytoplasm. It catalyses the reaction AMP + diphosphate = 5-phospho-alpha-D-ribose 1-diphosphate + adenine. Its pathway is purine metabolism; AMP biosynthesis via salvage pathway; AMP from adenine: step 1/1. Functionally, catalyzes a salvage reaction resulting in the formation of AMP, that is energically less costly than de novo synthesis. The polypeptide is Adenine phosphoribosyltransferase (Burkholderia lata (strain ATCC 17760 / DSM 23089 / LMG 22485 / NCIMB 9086 / R18194 / 383)).